The following is a 476-amino-acid chain: Protein transport protein Sec61 subunit alpha (476 aa).

The Cytoplasmic portion of the chain corresponds to 2 to 33 (GIKFLEFIKPFCAVLPEIQKPERKIQFREKVL). The helical transmembrane segment at 34 to 53 (WTAITLFIFLVCCQIPLFGI) threads the bilayer. Over 54 to 76 (MSSDSADPFYWMRVILASNRGTL) the chain is Lumenal. Residues 77 to 96 (MELGISPIVTSGLIMQLLAG) form a helical membrane-spanning segment. Over 97–117 (AKIIEVGDTPKDRALFNGAQK) the chain is Cytoplasmic. A helical membrane pass occupies residues 118 to 138 (LFGMIITIGQAIVYVMTGMYG). Residues 139-144 (DPSEMG) lie on the Lumenal side of the membrane. The helical transmembrane segment at 145–165 (AGICLLIIIQLFVAGLIVLLL) threads the bilayer. At 166 to 172 (DELLQKG) the chain is on the cytoplasmic side. Residues 173 to 193 (YGLGSGISLFIATNICETIVW) form a helical membrane-spanning segment. Topologically, residues 194–240 (KAFSPTTVNTGRGTEFEGAIIALFHLLATRTDKVRALREAFYRQNLP) are lumenal. The helical transmembrane segment at 241–261 (NILNLIATVFVFAVVIYFQGF) threads the bilayer. Over 262-288 (RVDLPIKSARYRGQYNTYPIKLFYTSN) the chain is Cytoplasmic. Residues 289-309 (IPIILQSALVSNLYVISQMLS) traverse the membrane as a helical segment. The Lumenal portion of the chain corresponds to 310–354 (TRFSGNFLVNLLGTWSDATSGGPARAYPVAGLCYYLSPPESFGSV). The helical transmembrane segment at 355-375 (LDDPVHAAIYIVFMLGSCAFF) threads the bilayer. Topologically, residues 376 to 420 (SKTWIEVSGSSAKDVAKQLKEQQMVMRGHRETSMVHELNRYIPTA) are cytoplasmic. The chain crosses the membrane as a helical span at residues 421 to 441 (AAFGGLCIGGLSVMADFLGAI). The Lumenal segment spans residues 442-445 (GSGT). Residues 446–462 (GILLAVTIIYQYFEIFV) form a helical membrane-spanning segment. Residues 463-476 (KEQSEMGSMGALLF) are Cytoplasmic-facing.

The protein belongs to the SecY/SEC61-alpha family. The SEC61 channel-forming translocon complex consists of channel-forming core components SEC61A1, SEC61B and SEC61G and different auxiliary components such as SEC62 and SEC63. The SEC61 channel associates with the multi-pass translocon (MPT) complex.

It is found in the endoplasmic reticulum membrane. Its function is as follows. Component of SEC61 channel-forming translocon complex that mediates transport of signal peptide-containing precursor polypeptides across the endoplasmic reticulum (ER). Forms a ribosome receptor and a gated pore in the ER membrane, both functions required for cotranslational translocation of nascent polypeptides. May cooperate with auxiliary protein SEC62, SEC63 and HSPA5/BiP to enable post-translational transport of small presecretory proteins. The SEC61 channel is also involved in ER membrane insertion of transmembrane proteins: it mediates membrane insertion of the first few transmembrane segments of proteins, while insertion of subsequent transmembrane regions of multi-pass membrane proteins is mediated by the multi-pass translocon (MPT) complex. This is Protein transport protein Sec61 subunit alpha (sec61a) from Notothenia angustata (Rockcod).